The chain runs to 870 residues: DNA-directed RNA polymerase subunit Rpo1N (870 aa).

The Zn(2+) site is built by cysteine 60, cysteine 63, cysteine 70, histidine 73, cysteine 100, cysteine 103, cysteine 146, and cysteine 149. Residues aspartate 451, aspartate 453, and aspartate 455 each coordinate Mg(2+).

Belongs to the RNA polymerase beta' chain family. In terms of assembly, part of the RNA polymerase complex. Requires Mg(2+) as cofactor. Zn(2+) is required as a cofactor.

Its subcellular location is the cytoplasm. The catalysed reaction is RNA(n) + a ribonucleoside 5'-triphosphate = RNA(n+1) + diphosphate. Its function is as follows. DNA-dependent RNA polymerase (RNAP) catalyzes the transcription of DNA into RNA using the four ribonucleoside triphosphates as substrates. Forms the clamp head domain. The chain is DNA-directed RNA polymerase subunit Rpo1N from Methanothermobacter thermautotrophicus (strain ATCC 29096 / DSM 1053 / JCM 10044 / NBRC 100330 / Delta H) (Methanobacterium thermoautotrophicum).